Here is a 358-residue protein sequence, read N- to C-terminus: Mannonate dehydratase (358 aa).

This sequence belongs to the mannonate dehydratase family. Fe(2+) is required as a cofactor. It depends on Mn(2+) as a cofactor.

The enzyme catalyses D-mannonate = 2-dehydro-3-deoxy-D-gluconate + H2O. Its pathway is carbohydrate metabolism; pentose and glucuronate interconversion. Functionally, catalyzes the dehydration of D-mannonate. The chain is Mannonate dehydratase from Lactococcus lactis subsp. lactis (strain IL1403) (Streptococcus lactis).